Here is a 95-residue protein sequence, read N- to C-terminus: UPF0235 protein Pcar_0617 (95 aa).

It belongs to the UPF0235 family.

The sequence is that of UPF0235 protein Pcar_0617 from Syntrophotalea carbinolica (strain DSM 2380 / NBRC 103641 / GraBd1) (Pelobacter carbinolicus).